The chain runs to 133 residues: Histone H2A (133 aa).

Over residues 1-10 (MTGGKSGGKA) the composition is skewed to gly residues. Residues 1 to 24 (MTGGKSGGKASGSKNAQSRSSKAG) form a disordered region. Lys-5 and Lys-9 each carry N6-acetyllysine. Gln-106 carries the post-translational modification N5-methylglutamine. Ser-130 carries the phosphoserine modification. The [ST]-Q motif motif lies at 130–131 (SQ).

The protein belongs to the histone H2A family. The nucleosome is a histone octamer containing two molecules each of H2A, H2B, H3 and H4 assembled in one H3-H4 heterotetramer and two H2A-H2B heterodimers. The octamer wraps approximately 147 bp of DNA. In terms of processing, phosphorylated to form H2AS128ph (gamma-H2A) in response to DNA double-strand breaks (DSBs) generated by exogenous genotoxic agents and by stalled replication forks. Phosphorylation is dependent on the DNA damage checkpoint kinases mec1/ATR and tel1/ATM, spreads on either side of a detected DSB site and may mark the surrounding chromatin for recruitment of proteins required for DNA damage signaling and repair. Gamma-H2A is removed from the DNA prior to the strand invasion-primer extension step of the repair process and subsequently dephosphorylated. Dephosphorylation is necessary for efficient recovery from the DNA damage checkpoint. Acetylated by esa1 to form H2AK4ac and H2AK7ac.

The protein localises to the nucleus. Its subcellular location is the chromosome. Its function is as follows. Core component of nucleosome which plays a central role in DNA double strand break (DSB) repair. Nucleosomes wrap and compact DNA into chromatin, limiting DNA accessibility to the cellular machineries which require DNA as a template. Histones thereby play a central role in transcription regulation, DNA repair, DNA replication and chromosomal stability. DNA accessibility is regulated via a complex set of post-translational modifications of histones, also called histone code, and nucleosome remodeling. In Aspergillus clavatus (strain ATCC 1007 / CBS 513.65 / DSM 816 / NCTC 3887 / NRRL 1 / QM 1276 / 107), this protein is Histone H2A (hta1).